The following is a 435-amino-acid chain: Serine--tRNA ligase (435 aa).

The disordered stretch occupies residues 48–68 (MKAQRNEASKKIGEAKRNGES). Over residues 49-68 (KAQRNEASKKIGEAKRNGES) the composition is skewed to basic and acidic residues. 230–232 (TAE) lines the L-serine pocket. An ATP-binding site is contributed by 261-263 (RSE). Glu284 is an L-serine binding site. Residue 348-351 (EVSS) coordinates ATP. Residue Ser383 coordinates L-serine.

The protein belongs to the class-II aminoacyl-tRNA synthetase family. Type-1 seryl-tRNA synthetase subfamily. In terms of assembly, homodimer. The tRNA molecule binds across the dimer.

It is found in the cytoplasm. The enzyme catalyses tRNA(Ser) + L-serine + ATP = L-seryl-tRNA(Ser) + AMP + diphosphate + H(+). It catalyses the reaction tRNA(Sec) + L-serine + ATP = L-seryl-tRNA(Sec) + AMP + diphosphate + H(+). Its pathway is aminoacyl-tRNA biosynthesis; selenocysteinyl-tRNA(Sec) biosynthesis; L-seryl-tRNA(Sec) from L-serine and tRNA(Sec): step 1/1. In terms of biological role, catalyzes the attachment of serine to tRNA(Ser). Is also able to aminoacylate tRNA(Sec) with serine, to form the misacylated tRNA L-seryl-tRNA(Sec), which will be further converted into selenocysteinyl-tRNA(Sec). This Limosilactobacillus reuteri (strain DSM 20016) (Lactobacillus reuteri) protein is Serine--tRNA ligase.